We begin with the raw amino-acid sequence, 380 residues long: D-alanine--D-alanine ligase (380 aa).

Residues 142-348 enclose the ATP-grasp domain; the sequence is KQVLTAHGIR…YADLIDRLIE (207 aa). Residue 172 to 227 participates in ATP binding; sequence QSRLGDNVFIKPANQGSSVGIHKASNVQEYLDGVADAFRYDYKVLVEQTIDGPQEV. Positions 302, 315, and 317 each coordinate Mg(2+).

The protein belongs to the D-alanine--D-alanine ligase family. Mg(2+) is required as a cofactor. Requires Mn(2+) as cofactor.

The protein localises to the cytoplasm. It catalyses the reaction 2 D-alanine + ATP = D-alanyl-D-alanine + ADP + phosphate + H(+). It participates in cell wall biogenesis; peptidoglycan biosynthesis. Its function is as follows. Cell wall formation. The chain is D-alanine--D-alanine ligase from Levilactobacillus brevis (strain ATCC 367 / BCRC 12310 / CIP 105137 / JCM 1170 / LMG 11437 / NCIMB 947 / NCTC 947) (Lactobacillus brevis).